Here is a 470-residue protein sequence, read N- to C-terminus: Leucine-rich repeat extensin-like protein 6 (470 aa).

The N-terminal stretch at 1–28 (MREDTFFFQWWFLVSGLSFIFLLPQAFT) is a signal peptide. A glycan (N-linked (GlcNAc...) asparagine) is linked at asparagine 83. LRR repeat units lie at residues 98 to 122 (VLTVAGIDLNHANIAGYLPLELGLL), 123 to 146 (TDLALFHINSNRFQGQLPKTLKCL), 147 to 170 (HLLHELDVSNNKLSGEFPSVIFSL), 171 to 194 (PSLKFLDIRFNEFQGDVPSQLFDL), 196 to 217 (LDALFINDNKFQFRLPRNIGNS), 219 to 241 (VSVLVLANNDLQGSCVPPSFYKM), 243 to 265 (KTLHEIIITNSQLTGCLNREIGL), 266 to 290 (LNQLTVFDVSYNNLVGSLPETIGDM), 291 to 314 (KSLEQLNIAHNKFSGYIPESICRL), and 316 to 337 (RLENFTYSYNFFSGEPPACLRL). Asparagine 319 carries an N-linked (GlcNAc...) asparagine glycan. The disordered stretch occupies residues 378–411 (SPPPPPPPPPPPPPPPPPPPPPPPPPPPPPYVYP). Positions 378 to 470 (SPPPPPPPPP…CNDLPTPVHY (93 aa)) are contains the Ser-Pro(4) repeats.

Post-translationally, hydroxylated on proline residues in the S-P-P-P-P repeat. In terms of processing, O-glycosylated on hydroxyprolines. In terms of tissue distribution, expressed in roots.

The protein localises to the secreted. It is found in the cell wall. In terms of biological role, modulates cell morphogenesis by regulating cell wall formation and assembly, and/or growth polarization. This Arabidopsis thaliana (Mouse-ear cress) protein is Leucine-rich repeat extensin-like protein 6 (LRX6).